Here is a 413-residue protein sequence, read N- to C-terminus: Glucose-1-phosphate adenylyltransferase (413 aa).

Alpha-D-glucose 1-phosphate is bound by residues Tyr102, Gly167, 182–183, and Ser200; that span reads EK.

Belongs to the bacterial/plant glucose-1-phosphate adenylyltransferase family. Homotetramer.

It catalyses the reaction alpha-D-glucose 1-phosphate + ATP + H(+) = ADP-alpha-D-glucose + diphosphate. It functions in the pathway glycan biosynthesis; glycogen biosynthesis. In terms of biological role, involved in the biosynthesis of ADP-glucose, a building block required for the elongation reactions to produce glycogen. Catalyzes the reaction between ATP and alpha-D-glucose 1-phosphate (G1P) to produce pyrophosphate and ADP-Glc. The chain is Glucose-1-phosphate adenylyltransferase from Deinococcus radiodurans (strain ATCC 13939 / DSM 20539 / JCM 16871 / CCUG 27074 / LMG 4051 / NBRC 15346 / NCIMB 9279 / VKM B-1422 / R1).